The sequence spans 228 residues: Latherin (228 aa).

Residues Met-1 to Ala-20 form the signal peptide. The cysteines at positions 153 and 196 are disulfide-linked.

Belongs to the BPI/LBP/Plunc superfamily. Plunc family. As to quaternary structure, monomer. Post-translationally, no sign of N-X-[ST] acceptor site even though reported as N-glycosylated. In terms of tissue distribution, found in sweat (at protein level).

It is found in the secreted. Functionally, major protein in sweat, has surfactant properties. Has a role in temperature regulation by having a capacity to make hydrophobic surfaces wettable and so can function in promoting spreading and evaporation of sweat. This is Latherin (LATH) from Equus caballus (Horse).